The primary structure comprises 173 residues: MVISIGCDHIVPDIKMKISEYLKSKGHTVIDNGTYDFVRTHYPIFGKAAAEKVASGEADLGVILCGTGVGISNSANKVKGIRAALVRDVGTARYAKEYLNANVIAVGGRITGIGLIENIIDVFLEAKYKPTKENQEIIKGIDELIENDKGQFGNEHFFDEFIEKWDNGGYPKE.

Belongs to the LacAB/RpiB family. Heteromultimeric protein consisting of LacA and LacB.

It catalyses the reaction aldehydo-D-galactose 6-phosphate = keto-D-tagatose 6-phosphate. Its pathway is carbohydrate metabolism; D-galactose 6-phosphate degradation; D-tagatose 6-phosphate from D-galactose 6-phosphate: step 1/1. In Clostridium acetobutylicum (strain ATCC 824 / DSM 792 / JCM 1419 / IAM 19013 / LMG 5710 / NBRC 13948 / NRRL B-527 / VKM B-1787 / 2291 / W), this protein is Galactose-6-phosphate isomerase subunit LacB.